Here is a 257-residue protein sequence, read N- to C-terminus: Protein YIPF5 (257 aa).

Over 1–124 (MSGFDNLNSG…RAADGSIMNE (124 aa)) the chain is Cytoplasmic. An interaction with Sec23 region spans residues 75–106 (PTTPQPFYGDSFEEEPPLLEELGINFDHIWQK). A helical membrane pass occupies residues 125–145 (TDLAGPVVFCLAFGATLLLAG). Residue K146 is a topological domain, lumenal. A helical transmembrane segment spans residues 147-167 (IQFGYVYGISAIGCLGMFCLL). At 168–173 (NLMSMT) the chain is on the cytoplasmic side. Residues 174 to 194 (GVSFGCVASVLGYCLLPMILL) form a helical membrane-spanning segment. Residues 195–196 (SS) are Lumenal-facing. The chain crosses the membrane as a helical span at residues 197 to 217 (FAVVFSLQGMVGILLTATIIG). Residues 218-236 (WCSFSASKIFISALAMDGQ) lie on the Cytoplasmic side of the membrane. The helical transmembrane segment at 237 to 257 (QLLVAYPCALLYGVFALISVF) threads the bilayer.

It belongs to the YIP1 family. As to quaternary structure, interacts with the COPII coat components Sec23 (SEC23A and/or SEC23B) and Sec24 (SEC24A and/or SEC24B). Interacts with YIF1A. May interact with RAB1A. Interacts with YIPF3 and YIPF4. As to expression, ubiquitously expressed.

It localises to the golgi apparatus. It is found in the cis-Golgi network membrane. The protein resides in the cytoplasmic vesicle. The protein localises to the COPII-coated vesicle. Its subcellular location is the endoplasmic reticulum membrane. Plays a role in transport between endoplasmic reticulum and Golgi. In pancreatic beta cells, required to transport proinsulin from endoplasmic reticulum into the Golgi. The polypeptide is Protein YIPF5 (Mus musculus (Mouse)).